Reading from the N-terminus, the 269-residue chain is UPF0162 protein YchA (269 aa).

The protein belongs to the UPF0162 family.

In Escherichia coli O157:H7, this protein is UPF0162 protein YchA (ychA).